The chain runs to 90 residues: Arminin 7722 (90 aa).

The first 18 residues, 1–18, serve as a signal peptide directing secretion; it reads MRSASLILFVAIVALTYA. Positions 19 to 59 are excised as a propeptide; sequence RSYEDIKEEIRNEVENEILDDLEEENDELDDNAQEVSDPRA. The residue at position 87 (threonine 87) is a Threonine amide.

This sequence belongs to the arminin family. As to expression, expressed in entodermal epithelium along the body column.

The protein localises to the secreted. It localises to the target cell membrane. Antimicrobial peptide with a broad-spectrum antimicrobial activity. Keeps its antibacterial activity under a wide range of salt concentrations that mimic physiological conditions of human blood, which is surprising, since Hydra is an obligate freshwater animal with nearly no salt tolerance. Does not affect red blood cells. The protein is Arminin 7722 of Hydra vulgaris (Hydra).